The following is a 503-amino-acid chain: Lysine--tRNA ligase (503 aa).

Mg(2+) is bound by residues Glu414 and Glu421.

It belongs to the class-II aminoacyl-tRNA synthetase family. In terms of assembly, homodimer. Mg(2+) is required as a cofactor.

Its subcellular location is the cytoplasm. It catalyses the reaction tRNA(Lys) + L-lysine + ATP = L-lysyl-tRNA(Lys) + AMP + diphosphate. This Neisseria gonorrhoeae (strain ATCC 700825 / FA 1090) protein is Lysine--tRNA ligase.